Reading from the N-terminus, the 73-residue chain is Translation initiation factor IF-1 (73 aa).

The region spanning 1–73 (MAKKQGAIEI…TRGRIVYRYK (73 aa)) is the S1-like domain.

The protein belongs to the IF-1 family. Component of the 30S ribosomal translation pre-initiation complex which assembles on the 30S ribosome in the order IF-2 and IF-3, IF-1 and N-formylmethionyl-tRNA(fMet); mRNA recruitment can occur at any time during PIC assembly.

The protein resides in the cytoplasm. Functionally, one of the essential components for the initiation of protein synthesis. Stabilizes the binding of IF-2 and IF-3 on the 30S subunit to which N-formylmethionyl-tRNA(fMet) subsequently binds. Helps modulate mRNA selection, yielding the 30S pre-initiation complex (PIC). Upon addition of the 50S ribosomal subunit IF-1, IF-2 and IF-3 are released leaving the mature 70S translation initiation complex. In Streptomyces coelicolor (strain ATCC BAA-471 / A3(2) / M145), this protein is Translation initiation factor IF-1.